A 361-amino-acid chain; its full sequence is MRGQRSLLLGPARLCLRLLLLLGYRRRCPPLLRGLVQRWRYGKVCLRSLLYNSFGGSDTAVDAAFEPVYWLVDNVIRWFGVVFVVLVIVLTGSIVAIAYLCVLPLILRTYSVPRLCWHFFYSHWNLILIVFHYYQAITTPPGYPPQGRNDIATVSICKKCIYPKPARTHHCSICNRCVLKMDHHCPWLNNCVGHYNHRYFFSFCFFMTLGCVYCSYGSWDLFREAYAAIETYHQTPPPTFSFRERITHKSLVYLWFLCSSVALALGALTMWHAVLISRGETSIERHINKKERRRLQAKGRVFRNPYNYGCLDNWKVFLGVDTGRHWLTRVLLPSSHLPHGNGMSWDPPPWVTAHSASVMAV.

Over 1–77 (MRGQRSLLLG…VYWLVDNVIR (77 aa)) the chain is Cytoplasmic. A helical transmembrane segment spans residues 78 to 98 (WFGVVFVVLVIVLTGSIVAIA). Topologically, residues 99-116 (YLCVLPLILRTYSVPRLC) are lumenal. The helical transmembrane segment at 117-137 (WHFFYSHWNLILIVFHYYQAI) threads the bilayer. Residues 138-198 (TTPPGYPPQG…NNCVGHYNHR (61 aa)) are Cytoplasmic-facing. The 51-residue stretch at 155 to 205 (SICKKCIYPKPARTHHCSICNRCVLKMDHHCPWLNNCVGHYNHRYFFSFCF) folds into the DHHC domain. The active-site S-palmitoyl cysteine intermediate is C185. The chain crosses the membrane as a helical span at residues 199–219 (YFFSFCFFMTLGCVYCSYGSW). Topologically, residues 220-250 (DLFREAYAAIETYHQTPPPTFSFRERITHKS) are lumenal. Residues 251–271 (LVYLWFLCSSVALALGALTMW) traverse the membrane as a helical segment. The Cytoplasmic portion of the chain corresponds to 272–361 (HAVLISRGET…TAHSASVMAV (90 aa)).

This sequence belongs to the DHHC palmitoyltransferase family. As to quaternary structure, interacts with ABL1. Interacts with COPS5. In terms of tissue distribution, ubiquitously expressed.

The protein resides in the endoplasmic reticulum membrane. The catalysed reaction is L-cysteinyl-[protein] + hexadecanoyl-CoA = S-hexadecanoyl-L-cysteinyl-[protein] + CoA. Palmitoyl acyltransferase that mediates palmitoylation of proteins such as PLN and ZDHHC6. Required during embryonic heart development and cardiac function, possibly by mediating palmitoylation of PLN, thereby affecting PLN phosphorylation and homooligomerization. Also required for eye development. Palmitoylates ZDHHC6, affecting the quaternary assembly of ZDHHC6, its localization, stability and function. May play a role in DNA damage response. May be involved in apoptosis regulation. Involved in the proliferation of neural stem cells by regulating the FGF/ERK pathway. This chain is Palmitoyltransferase ZDHHC16, found in Mus musculus (Mouse).